A 212-amino-acid polypeptide reads, in one-letter code: Thymidylate kinase (212 aa).

10 to 17 serves as a coordination point for ATP; it reads GIDGCGKT.

It belongs to the thymidylate kinase family.

It catalyses the reaction dTMP + ATP = dTDP + ADP. In terms of biological role, phosphorylation of dTMP to form dTDP in both de novo and salvage pathways of dTTP synthesis. The polypeptide is Thymidylate kinase (Synechococcus sp. (strain RCC307)).